A 210-amino-acid chain; its full sequence is Ribosomal RNA large subunit methyltransferase E (210 aa).

S-adenosyl-L-methionine contacts are provided by Gly-55, Trp-57, Asp-75, Asp-93, and Asp-117. Catalysis depends on Lys-157, which acts as the Proton acceptor. Residues 175 to 210 (YRQVKTTKPPSSRKKSSEMYVVGLDFKPKKNKKSKD) form a disordered region.

It belongs to the class I-like SAM-binding methyltransferase superfamily. RNA methyltransferase RlmE family.

Its subcellular location is the cytoplasm. The catalysed reaction is uridine(2552) in 23S rRNA + S-adenosyl-L-methionine = 2'-O-methyluridine(2552) in 23S rRNA + S-adenosyl-L-homocysteine + H(+). Specifically methylates the uridine in position 2552 of 23S rRNA at the 2'-O position of the ribose in the fully assembled 50S ribosomal subunit. In Methanobrevibacter smithii (strain ATCC 35061 / DSM 861 / OCM 144 / PS), this protein is Ribosomal RNA large subunit methyltransferase E.